Reading from the N-terminus, the 205-residue chain is Outer-membrane lipoprotein carrier protein (205 aa).

Residues 1-19 (MKKIIICFIFVFSINVSFA) form the signal peptide.

Belongs to the LolA family. In terms of assembly, monomer.

It localises to the periplasm. In terms of biological role, participates in the translocation of lipoproteins from the inner membrane to the outer membrane. Only forms a complex with a lipoprotein if the residue after the N-terminal Cys is not an aspartate (The Asp acts as a targeting signal to indicate that the lipoprotein should stay in the inner membrane). This Francisella tularensis subsp. tularensis (strain FSC 198) protein is Outer-membrane lipoprotein carrier protein.